The sequence spans 313 residues: Biotin synthase (313 aa).

Residues 28–258 (NFGNDIELCS…LFPQARLRLS (231 aa)) enclose the Radical SAM core domain. Cysteine 46, cysteine 50, and cysteine 53 together coordinate [4Fe-4S] cluster. The [2Fe-2S] cluster site is built by cysteine 90, cysteine 121, cysteine 181, and arginine 256.

This sequence belongs to the radical SAM superfamily. Biotin synthase family. As to quaternary structure, homodimer. The cofactor is [4Fe-4S] cluster. [2Fe-2S] cluster serves as cofactor.

The catalysed reaction is (4R,5S)-dethiobiotin + (sulfur carrier)-SH + 2 reduced [2Fe-2S]-[ferredoxin] + 2 S-adenosyl-L-methionine = (sulfur carrier)-H + biotin + 2 5'-deoxyadenosine + 2 L-methionine + 2 oxidized [2Fe-2S]-[ferredoxin]. It participates in cofactor biosynthesis; biotin biosynthesis; biotin from 7,8-diaminononanoate: step 2/2. Catalyzes the conversion of dethiobiotin (DTB) to biotin by the insertion of a sulfur atom into dethiobiotin via a radical-based mechanism. This Francisella tularensis subsp. tularensis (strain FSC 198) protein is Biotin synthase.